The sequence spans 159 residues: SsrA-binding protein (159 aa).

Positions 137-159 (KRQTEKERDWEREKQRLFQRDQR) are disordered.

The protein belongs to the SmpB family.

Its subcellular location is the cytoplasm. In terms of biological role, required for rescue of stalled ribosomes mediated by trans-translation. Binds to transfer-messenger RNA (tmRNA), required for stable association of tmRNA with ribosomes. tmRNA and SmpB together mimic tRNA shape, replacing the anticodon stem-loop with SmpB. tmRNA is encoded by the ssrA gene; the 2 termini fold to resemble tRNA(Ala) and it encodes a 'tag peptide', a short internal open reading frame. During trans-translation Ala-aminoacylated tmRNA acts like a tRNA, entering the A-site of stalled ribosomes, displacing the stalled mRNA. The ribosome then switches to translate the ORF on the tmRNA; the nascent peptide is terminated with the 'tag peptide' encoded by the tmRNA and targeted for degradation. The ribosome is freed to recommence translation, which seems to be the essential function of trans-translation. The chain is SsrA-binding protein from Cellvibrio japonicus (strain Ueda107) (Pseudomonas fluorescens subsp. cellulosa).